Consider the following 487-residue polypeptide: Glycogen synthase (487 aa).

Residue K23 coordinates ADP-alpha-D-glucose.

This sequence belongs to the glycosyltransferase 1 family. Bacterial/plant glycogen synthase subfamily.

The enzyme catalyses [(1-&gt;4)-alpha-D-glucosyl](n) + ADP-alpha-D-glucose = [(1-&gt;4)-alpha-D-glucosyl](n+1) + ADP + H(+). The protein operates within glycan biosynthesis; glycogen biosynthesis. In terms of biological role, synthesizes alpha-1,4-glucan chains using ADP-glucose. The chain is Glycogen synthase from Pseudomonas fluorescens (strain Pf0-1).